A 394-amino-acid chain; its full sequence is Nicotinate phosphoribosyltransferase (394 aa).

Residue histidine 218 is modified to Phosphohistidine; by autocatalysis.

The protein belongs to the NAPRTase family. Transiently phosphorylated on a His residue during the reaction cycle. Phosphorylation strongly increases the affinity for substrates and increases the rate of nicotinate D-ribonucleotide production. Dephosphorylation regenerates the low-affinity form of the enzyme, leading to product release.

The enzyme catalyses nicotinate + 5-phospho-alpha-D-ribose 1-diphosphate + ATP + H2O = nicotinate beta-D-ribonucleotide + ADP + phosphate + diphosphate. The protein operates within cofactor biosynthesis; NAD(+) biosynthesis; nicotinate D-ribonucleotide from nicotinate: step 1/1. Functionally, catalyzes the synthesis of beta-nicotinate D-ribonucleotide from nicotinate and 5-phospho-D-ribose 1-phosphate at the expense of ATP. This is Nicotinate phosphoribosyltransferase from Xylella fastidiosa (strain 9a5c).